A 1060-amino-acid chain; its full sequence is RNA-binding protein 27 (1060 aa).

Basic and acidic residues-rich tracts occupy residues 91–102 (LVQEKEEIKEEV) and 124–143 (TRSE…DGKW). Disordered regions lie at residues 91–143 (LVQE…DGKW) and 162–235 (WRRG…GAQS). Residues 165-185 (GRSKSRSKSRGLSRSRSRSRG) show a composition bias toward basic residues. Positions 186–211 (RSKDRDPNRNVEHRERSKFKSERNDL) are enriched in basic and acidic residues. Over residues 225 to 235 (SSEQYSSGAQS) the composition is skewed to polar residues. The C3H1-type zinc-finger motif lies at 273 to 301 (LPPKRRCRDYDERGFCVLGDLCQFDHGND). Pro residues-rich tracts occupy residues 319-356 (PPPG…PGPG) and 371-384 (QPPP…PRPP). The disordered stretch occupies residues 319–412 (PPPGLPPPPP…PNLASVGTRL (94 aa)). Over residues 386 to 402 (TQSSLINSRDQPGTSAV) the composition is skewed to polar residues. The residue at position 447 (Thr447) is a Phosphothreonine. Arg455 carries the post-translational modification Omega-N-methylarginine. The interval 565-592 (MSGLEGPLTKKPWLGKQGNNNQNKPGFL) is disordered. Low complexity predominate over residues 579 to 588 (GKQGNNNQNK). One can recognise an RRM domain in the interval 600 to 674 (TKLEVKKIPQ…RFIRVLWHRE (75 aa)). The stretch at 809 to 886 (VQEVLKKKQE…KDELKTSSAV (78 aa)) forms a coiled coil. Ser927 carries the phosphoserine modification. 2 disordered regions span residues 940 to 968 (PVGR…SLNH) and 1006 to 1060 (DRRL…SWRR). Residues Ser1012 and Ser1020 each carry the phosphoserine modification. Positions 1024 to 1053 (ETEEEEVKEEETETSDLFLPDDDDEDEDEY) are enriched in acidic residues.

It is found in the cytoplasm. The protein localises to the nucleus speckle. Functionally, may be involved in the turnover of nuclear polyadenylated (pA+) RNA. In Homo sapiens (Human), this protein is RNA-binding protein 27.